The primary structure comprises 347 residues: Membrane progestin receptor gamma-B (347 aa).

Topologically, residues 1–52 are cytoplasmic; that stretch reads MLSLIKLQRVFNVHQVPKAFHEDGIISGYRHPRSSATECVWSLFQLTNETLN. Residues 53 to 73 traverse the membrane as a helical segment; the sequence is VWTHFLPTWYFLWKLMTVLLM. Residues 74-81 are Extracellular-facing; the sequence is EDVWNEAY. A helical transmembrane segment spans residues 82–102; the sequence is TWPLLVFLFSCCVYPLASSCA. Residues 103–114 lie on the Cytoplasmic side of the membrane; the sequence is HTFSSMSTRARH. The chain crosses the membrane as a helical span at residues 115-135; that stretch reads ICYFFDYGALSFYSLGSAISY. Residues 136-138 are Extracellular-facing; it reads SAY. The chain crosses the membrane as a helical span at residues 139-159; sequence VFPDAWLSSSFHAYYISVAVF. Topologically, residues 160 to 201 are cytoplasmic; that stretch reads NTVLSTSLACYSRLGLPLLHYSHDIVERFSERQCPRMSKVLR. A helical membrane pass occupies residues 202-222; that stretch reads ILAFAYPYLFDNIPLFYRLFV. Over 223-235 the chain is Extracellular; that stretch reads CVGEGCTDNEANS. The chain crosses the membrane as a helical span at residues 236 to 256; sequence VHVQHTLLAFLTSFLFATHLP. Over 257–314 the chain is Cytoplasmic; that stretch reads ERLAPGRFDYIGHSHQLFHVCAIIGTHFQMKAIEMDMGLRRSQLLASAPAISFNNTIG. The chain crosses the membrane as a helical span at residues 315–335; it reads AALLCVSVSLGIICVYSLPLL. Topologically, residues 336 to 347 are extracellular; that stretch reads YSSNPKNTANKE.

This sequence belongs to the ADIPOR family.

The protein resides in the membrane. In terms of biological role, steroid membrane receptor. Binds progesterone. May be involved in oocyte maturation. In Danio rerio (Zebrafish), this protein is Membrane progestin receptor gamma-B.